Here is a 78-residue protein sequence, read N- to C-terminus: Spermatid-specific protein T1 (78 aa).

Residues 1-21 are hydrophobic; that stretch reads MKVAANSSKMLAEKLELMKGG. The segment at 1-78 is disordered; that stretch reads MKVAANSSKM…YSRRRYRRRR (78 aa). Positions 20 to 78 are enriched in basic residues; it reads GGRRRRRRSRRRRRRSRRRSRSPYRRRYRRRRRRRRRRSRRRRYRRRRSYSRRRYRRRR.

In terms of processing, phosphorylation occurs at different degrees. The triphosphorylated form may be predominant in T1. SP1 appears to be phosphorylated in elongated spermatids, but dephosphorylated in mature sperm cells. Testis.

The protein resides in the nucleus. Its subcellular location is the chromosome. Cuttlefish spermiogenesis is characterized by a double nuclear protein transition: histones -&gt; spermatid-specific proteins (T1/T2) -&gt; protamines (SP1/SP2). The protamines compact sperm DNA into a highly condensed, stable and inactive complex. This chain is Spermatid-specific protein T1, found in Sepia officinalis (Common cuttlefish).